The primary structure comprises 328 residues: Tetraacyldisaccharide 4'-kinase (328 aa).

55-62 (TAGGNGKT) serves as a coordination point for ATP.

It belongs to the LpxK family.

The catalysed reaction is a lipid A disaccharide + ATP = a lipid IVA + ADP + H(+). The protein operates within glycolipid biosynthesis; lipid IV(A) biosynthesis; lipid IV(A) from (3R)-3-hydroxytetradecanoyl-[acyl-carrier-protein] and UDP-N-acetyl-alpha-D-glucosamine: step 6/6. In terms of biological role, transfers the gamma-phosphate of ATP to the 4'-position of a tetraacyldisaccharide 1-phosphate intermediate (termed DS-1-P) to form tetraacyldisaccharide 1,4'-bis-phosphate (lipid IVA). The chain is Tetraacyldisaccharide 4'-kinase from Escherichia coli O17:K52:H18 (strain UMN026 / ExPEC).